A 90-amino-acid polypeptide reads, in one-letter code: Progonadoliberin-3 (90 aa).

A signal peptide spans 1–23; sequence MEAGSRVIMQVLLLALVVQVTLS. Glutamine 24 carries the pyrrolidone carboxylic acid modification. Position 33 is a glycine amide (glycine 33).

It belongs to the GnRH family. In terms of tissue distribution, expressed only in the terminal nerve nucleus of the telencephalon.

The protein resides in the secreted. Stimulates the secretion of gonadotropins. The protein is Progonadoliberin-3 (gnrh3) of Haplochromis burtoni (Burton's mouthbrooder).